Here is an 862-residue protein sequence, read N- to C-terminus: MAMESSIVIKVKYEETLRRFNACVINEKLDLDIGGLRDKIIQLFNFAHDAELTLTYIDEDGDVVTLVDDEDLQDVMRQDLNPLRISARLNAGERSGRASARSSGNSTPLRSPRVQPPFLNLNSRVSDVLKYIPEPLRESVMKVCSDMTASASSSAPILAELVDAMSEMGLSYYQNQASGSQAVKEAGSCSGISKGNTKSADGGMPNVKIGESSPKKNRPLTALHGEPKPNASNEAVDASVKLVCKSETLEGDRTEDLSSSFKGSKAQTSLVNSLEKDKKFDVRSLDGRTIGYAYVRNSPIPPEKTSDEQPSKGHPVAKPVDLGGSASSSKVKQCNWDSPNADSSGSSINMPYDGFTPSGLVHLNTVNVNDSHNAGSSGSSMKMPYDGFRPAVRHLGPLIPVNACPFSGVPTVNNPIPPQNFSFEVPLKRSHNHSDGTGTIFHKGVRCDGCGVHPITGPRFISKVKENYDLCSICFAEMGNDADYIRMDRPLTYPNPWSFKSLHDLHGRLRPRPPTVPQVIRGFGLKAGRPKLDSRFIQDVNVLDGTIMAPLTRFTKIWRMKNNGNLVWPQGTQLVWIGGDKLSDRFSVELEITTAGLAVDQELDVAVDFTAPEHPGRYISYWRLASASGQKFGQRVWVLIQVDALLSVPKKGLVHEAFQGLNLNLPPAGSGVSGPDIINVNSEPQNVLPEPKSSSTMELVDSVAEVNQNKEQEAKFPINDSLLVGFGDKSSSPSASGSPISYPVIDLTEKPSADSSMQPSAAVAMQAPLQDARGNFEVEMSLLQELEEMGFKQVDLNKEILRKNEYDLEQSVDDLCGVAEWDPILEELKEMGFCDKEMNKKLLKKNNGSIKRVVMDLIAGEQ.

The region spanning 6–90 is the PB1 domain; the sequence is SIVIKVKYEE…NPLRISARLN (85 aa). Over residues 92–106 the composition is skewed to low complexity; sequence GERSGRASARSSGNS. 3 disordered regions span residues 92–117, 194–234, and 295–345; these read GERS…VQPP, KGNT…ASNE, and VRNS…DSSG. Positions 325 to 345 are enriched in polar residues; sequence SASSSKVKQCNWDSPNADSSG. The ZZ-type; degenerate zinc finger occupies 442-492; that stretch reads HKGVRCDGCGVHPITGPRFISKVKENYDLCSICFAEMGNDADYIRMDRPLT. Zn(2+) is bound by residues cysteine 447, cysteine 450, cysteine 471, and cysteine 474. A UBA domain is found at 811–860; it reads SVDDLCGVAEWDPILEELKEMGFCDKEMNKKLLKKNNGSIKRVVMDLIAG. Residues 817 to 824 carry the ATG8 interacting motif (AIM) motif; that stretch reads GVAEWDPI.

In terms of assembly, interacts (via C-terminal AIM motif) with ATG8CL.

It localises to the vacuole. Its subcellular location is the cytoplasmic vesicle. The protein localises to the autophagosome. Functionally, autophagic substrate that functions as a host autophagy cargo receptor. Requires ATG8 protein expression to be recognized as an autophagic substrate. Activates ATG8CL-mediated selective autophagy, and contributes to defense against the fungal pathogen Phytophtora infestans. The polypeptide is Protein JOKA2 (Solanum tuberosum (Potato)).